The following is a 206-amino-acid chain: Pyridoxine/pyridoxamine 5'-phosphate oxidase (206 aa).

Residues 53–58 (RMVLLK), 68–69 (YT), lysine 75, and glutamine 97 each bind FMN. Substrate is bound at residue lysine 58. The substrate site is built by tyrosine 115, arginine 119, and serine 123. FMN contacts are provided by residues 132-133 (QS) and tryptophan 177. Residue 183-185 (RLH) coordinates substrate. Arginine 187 contributes to the FMN binding site.

The protein belongs to the pyridoxamine 5'-phosphate oxidase family. In terms of assembly, homodimer. The cofactor is FMN.

It catalyses the reaction pyridoxamine 5'-phosphate + O2 + H2O = pyridoxal 5'-phosphate + H2O2 + NH4(+). The catalysed reaction is pyridoxine 5'-phosphate + O2 = pyridoxal 5'-phosphate + H2O2. It participates in cofactor metabolism; pyridoxal 5'-phosphate salvage; pyridoxal 5'-phosphate from pyridoxamine 5'-phosphate: step 1/1. It functions in the pathway cofactor metabolism; pyridoxal 5'-phosphate salvage; pyridoxal 5'-phosphate from pyridoxine 5'-phosphate: step 1/1. Its function is as follows. Catalyzes the oxidation of either pyridoxine 5'-phosphate (PNP) or pyridoxamine 5'-phosphate (PMP) into pyridoxal 5'-phosphate (PLP). This chain is Pyridoxine/pyridoxamine 5'-phosphate oxidase, found in Rhizobium meliloti (strain 1021) (Ensifer meliloti).